The following is a 364-amino-acid chain: UDP-N-acetylglucosamine--N-acetylmuramyl-(pentapeptide) pyrophosphoryl-undecaprenol N-acetylglucosamine transferase (364 aa).

Residues 10 to 12 (TGG), Asn-126, Arg-167, Ser-199, Ile-253, and Gln-298 contribute to the UDP-N-acetyl-alpha-D-glucosamine site.

It belongs to the glycosyltransferase 28 family. MurG subfamily.

The protein localises to the cell inner membrane. It carries out the reaction di-trans,octa-cis-undecaprenyl diphospho-N-acetyl-alpha-D-muramoyl-L-alanyl-D-glutamyl-meso-2,6-diaminopimeloyl-D-alanyl-D-alanine + UDP-N-acetyl-alpha-D-glucosamine = di-trans,octa-cis-undecaprenyl diphospho-[N-acetyl-alpha-D-glucosaminyl-(1-&gt;4)]-N-acetyl-alpha-D-muramoyl-L-alanyl-D-glutamyl-meso-2,6-diaminopimeloyl-D-alanyl-D-alanine + UDP + H(+). It participates in cell wall biogenesis; peptidoglycan biosynthesis. Its function is as follows. Cell wall formation. Catalyzes the transfer of a GlcNAc subunit on undecaprenyl-pyrophosphoryl-MurNAc-pentapeptide (lipid intermediate I) to form undecaprenyl-pyrophosphoryl-MurNAc-(pentapeptide)GlcNAc (lipid intermediate II). The polypeptide is UDP-N-acetylglucosamine--N-acetylmuramyl-(pentapeptide) pyrophosphoryl-undecaprenol N-acetylglucosamine transferase (Amoebophilus asiaticus (strain 5a2)).